A 418-amino-acid polypeptide reads, in one-letter code: Putative competence-damage inducible protein (418 aa).

It belongs to the CinA family.

This is Putative competence-damage inducible protein from Clostridioides difficile (strain 630) (Peptoclostridium difficile).